A 314-amino-acid chain; its full sequence is MSRPRRRGRDVHGVLLLDKPQGVSSNDVLQKVKRIFNANRAGHTGALDPLATGMLPICLGEATKFSQYLLDSDKRYRVIARLGQRTDTSDADGNVIEERAIGFSATDLELALESFRGTTQQVPSMYSALKYQGRKLYEYARQGLTVPREAREITVYELQFIRWEGDELELEIHCSKGTYIRTIIDDLGEQLGCGAHVIYLRRLQVAIYPTERMVTLEQLAALAEQAQTQEHSLSLSLDSLLMPMESPVIDFPEVNLPPVVAGYLKLGQAVQAANAPLNGMVRITEGDAHKFIGMGEIDGDGRVAPRRLVVEFPV.

His-43 lines the substrate pocket. Asp-48 (nucleophile) is an active-site residue. Tyr-76, Tyr-179, and Leu-200 together coordinate substrate.

It belongs to the pseudouridine synthase TruB family. Type 1 subfamily.

The catalysed reaction is uridine(55) in tRNA = pseudouridine(55) in tRNA. Functionally, responsible for synthesis of pseudouridine from uracil-55 in the psi GC loop of transfer RNAs. This Pectobacterium atrosepticum (strain SCRI 1043 / ATCC BAA-672) (Erwinia carotovora subsp. atroseptica) protein is tRNA pseudouridine synthase B.